The sequence spans 470 residues: MQGHAMAVDAKTGNSLSERPTVAFAHLGCEKNRVDTEHMLGLLAEAGYGVSSDENDANLVVVNTCSFIQDAREESVRTLVGLAEQGKELIIAGCLAQHFQDELLESIPEAKAIVGTGDYQHIVEVLQQVEAGERVNRVSQTPTFVADENLPRYRTTGEAVAYLKVAEGCDYRCAFCIIPHLRGNQRSRTIESIVAEAHQLAEQGVQELILISQITTNYGLDLYGKPRLADLLKALGDVEIPWIRVHYAYPTGLTPAVLAAYRDVPNVLPYLDLPLQHSHPEVLRAMNRPWQADVNERLLDQIREQLPNAILRTTLIVGFPGETEDQFEHLAGFLERQRFDHVGIFTFSPEDGTAAATLPDSVPDEIAIARKDKLMTLQQPISAARNASWIGKTVDVLVEQHNPSTGEMIGRCSRFAPEVDGEVLVQPGDNGLQVNPGTMVPVQITGADIYDLSGHVVSAAHMVAAARAAT.

Positions Pro20–Ala131 constitute an MTTase N-terminal domain. Cys29, Cys65, Cys94, Cys169, Cys173, and Cys176 together coordinate [4Fe-4S] cluster. Positions Thr155–Ala384 constitute a Radical SAM core domain. The TRAM domain maps to Ala387–Ser458.

This sequence belongs to the methylthiotransferase family. RimO subfamily. [4Fe-4S] cluster serves as cofactor.

It is found in the cytoplasm. The catalysed reaction is L-aspartate(89)-[ribosomal protein uS12]-hydrogen + (sulfur carrier)-SH + AH2 + 2 S-adenosyl-L-methionine = 3-methylsulfanyl-L-aspartate(89)-[ribosomal protein uS12]-hydrogen + (sulfur carrier)-H + 5'-deoxyadenosine + L-methionine + A + S-adenosyl-L-homocysteine + 2 H(+). Functionally, catalyzes the methylthiolation of an aspartic acid residue of ribosomal protein uS12. The polypeptide is Ribosomal protein uS12 methylthiotransferase RimO (Synechococcus sp. (strain CC9311)).